Here is a 108-residue protein sequence, read N- to C-terminus: Nucleoid-associated protein mma_2329 (108 aa).

The protein belongs to the YbaB/EbfC family. Homodimer.

Its subcellular location is the cytoplasm. It localises to the nucleoid. Its function is as follows. Binds to DNA and alters its conformation. May be involved in regulation of gene expression, nucleoid organization and DNA protection. The polypeptide is Nucleoid-associated protein mma_2329 (Janthinobacterium sp. (strain Marseille) (Minibacterium massiliensis)).